Here is a 1779-residue protein sequence, read N- to C-terminus: 5-methyl-1-naphthoate synthase (1779 aa).

The Ketosynthase family 3 (KS3) domain occupies 10 to 433 (VEPLAVIGMS…GSIAHAVLQQ (424 aa)). Residues Cys-181, His-316, and His-356 each act as for beta-ketoacyl synthase activity in the active site. The N-terminal hotdog fold stretch occupies residues 902–1027 (HTLIGARTTV…ATVVHEPEVG (126 aa)). Positions 902–1180 (HTLIGARTTV…YVKVQDIGSG (279 aa)) constitute a PKS/mFAS DH domain. Residues 1042–1180 (PVSWTWAKVD…YVKVQDIGSG (139 aa)) form a C-terminal hotdog fold region. In terms of domain architecture, Carrier spans 1664–1742 (GELPELVLKV…ALAEFLAAEV (79 aa)). Ser-1702 carries the post-translational modification O-(pantetheine 4'-phosphoryl)serine. Positions 1746–1771 (TADAEETDPVAGLPAPQQGSGTAEQL) are disordered.

The catalysed reaction is 5 malonyl-CoA + acetyl-CoA + 3 NADPH + 7 H(+) = 5-methyl-1-naphthoate + 5 CO2 + 3 NADP(+) + 6 CoA + 4 H2O. It participates in antibiotic biosynthesis. In terms of biological role, polyketide synthase that catalyzes the biosynthesis of the bicyclic aromatic compound 5-methyl-1-naphthoate in the biosynthesis of the antitumor antibiotic azinomycin B. The sequence is that of 5-methyl-1-naphthoate synthase from Streptomyces sahachiroi.